The following is a 265-amino-acid chain: Protein B8 (265 aa).

The protein is Protein B8 (B8) of Homo sapiens (Human).